We begin with the raw amino-acid sequence, 335 residues long: Nucleoid-associated protein Ent638_2782 (335 aa).

Belongs to the YejK family.

It localises to the cytoplasm. The protein resides in the nucleoid. The protein is Nucleoid-associated protein Ent638_2782 of Enterobacter sp. (strain 638).